Consider the following 224-residue polypeptide: UPF0758 protein Pmen_4376 (224 aa).

Residues 102–224 (ALESPQAVRD…PLSMAELGWM (123 aa)) form the MPN domain. Zn(2+) contacts are provided by His-173, His-175, and Asp-186. The JAMM motif signature appears at 173 to 186 (HNHPSGVCEPSQAD).

Belongs to the UPF0758 family.

This chain is UPF0758 protein Pmen_4376, found in Ectopseudomonas mendocina (strain ymp) (Pseudomonas mendocina).